A 64-amino-acid chain; its full sequence is MMKKYMIERDNKFFSSFGNDFDKKGRQKLKPIYSLKQNAVYFSSLSDAQITASRVQGKVIEIKG.

This is an uncharacterized protein from Mycoplasma (Bacteriophage L2).